A 304-amino-acid chain; its full sequence is MAATLWRLYSKSICNSLQGIILNKPFIQKQLLLSSRTRSLSFSSDSQFGSATAEVCSNTGLKTGGGIIVKEGFLRWENGGGTCHSSAQIYSSALVEFGAVVHEKAVLGAEVHVGSGTVIGPSVDIGPSTRIGYNVSISNCSIGDSCVIHNGVCIGQDGFGFYVDEHGNMVKKPQTLNVKIGNRVEIGANTCIDRGSWRETVIEDDTKIDNLVQIGHNVIIGKCCLLCGQVGIAGSVTIGDYVALGGRAAVRDHVSIVSKVRLAANSCVTRNITEPGDFGGFPAVPIHEWRKQIVRAQIANKREI.

Residues Met1–Gln47 constitute a mitochondrion transit peptide. Phe159–Phe161 serves as a coordination point for UDP-N-acetyl-alpha-D-glucosamine. Hexadecanoate contacts are provided by Asp209 and Gln213. The active-site Proton acceptor is the His216. Positions 217, 235, and 253 each coordinate UDP-N-acetyl-alpha-D-glucosamine.

The protein belongs to the transferase hexapeptide repeat family. LpxD subfamily. In terms of assembly, homotrimer.

It localises to the mitochondrion. It catalyses the reaction a UDP-3-O-[(3R)-3-hydroxyacyl]-alpha-D-glucosamine + a (3R)-hydroxyacyl-[ACP] = a UDP-2-N,3-O-bis[(3R)-3-hydroxyacyl]-alpha-D-glucosamine + holo-[ACP] + H(+). It participates in glycolipid biosynthesis; lipid IV(A) biosynthesis; lipid IV(A) from (3R)-3-hydroxytetradecanoyl-[acyl-carrier-protein] and UDP-N-acetyl-alpha-D-glucosamine: step 3/6. In terms of biological role, involved in the biosynthesis of lipid A, a phosphorylated glycolipid that in bacteria anchors the lipopolysaccharide to the outer membrane of the cell. Lipid A-like molecules in plants may serve as structural components of the outer membranes of mitochondria and/or chloroplasts, or may be involved in signal transduction or plant defense responses. In Arabidopsis thaliana (Mouse-ear cress), this protein is Probable UDP-3-O-acylglucosamine N-acyltransferase 2, mitochondrial (LPXD2).